Here is a 180-residue protein sequence, read N- to C-terminus: ATP synthase subunit delta 2 (180 aa).

The protein belongs to the ATPase delta chain family. As to quaternary structure, F-type ATPases have 2 components, F(1) - the catalytic core - and F(0) - the membrane proton channel. F(1) has five subunits: alpha(3), beta(3), gamma(1), delta(1), epsilon(1). F(0) has three main subunits: a(1), b(2) and c(10-14). The alpha and beta chains form an alternating ring which encloses part of the gamma chain. F(1) is attached to F(0) by a central stalk formed by the gamma and epsilon chains, while a peripheral stalk is formed by the delta and b chains.

The protein resides in the cell inner membrane. F(1)F(0) ATP synthase produces ATP from ADP in the presence of a proton or sodium gradient. F-type ATPases consist of two structural domains, F(1) containing the extramembraneous catalytic core and F(0) containing the membrane proton channel, linked together by a central stalk and a peripheral stalk. During catalysis, ATP synthesis in the catalytic domain of F(1) is coupled via a rotary mechanism of the central stalk subunits to proton translocation. In terms of biological role, this protein is part of the stalk that links CF(0) to CF(1). It either transmits conformational changes from CF(0) to CF(1) or is implicated in proton conduction. This Vibrio campbellii (strain ATCC BAA-1116) protein is ATP synthase subunit delta 2.